A 581-amino-acid chain; its full sequence is Invertase (581 aa).

A signal peptide spans 1–22 (MFLKYILASGICLVSLLSSTNA). N37, N40, N46, N57, N62, and N79 each carry an N-linked (GlcNAc...) asparagine glycan. Residues 94-97 (FMND), Q113, and 158-159 (FS) each bind substrate. D97 is an active-site residue. N168 and N175 each carry an N-linked (GlcNAc...) asparagine glycan. Residues 227–228 (RD) and E280 contribute to the substrate site. Residue N322 is glycosylated (N-linked (GlcNAc...) asparagine). Residue W366 coordinates substrate. 7 N-linked (GlcNAc...) asparagine glycosylation sites follow: N399, N409, N425, N446, N452, N519, and N569.

This sequence belongs to the glycosyl hydrolase 32 family. Post-translationally, glycosylated; contains 67% carbohydrates. This is composed of equimolar amounts of mannose and galactose. There is also a small amount of glucosamine present.

The enzyme catalyses Hydrolysis of terminal non-reducing beta-D-fructofuranoside residues in beta-D-fructofuranosides.. The chain is Invertase (inv1) from Schizosaccharomyces pombe (strain 972 / ATCC 24843) (Fission yeast).